We begin with the raw amino-acid sequence, 223 residues long: Small ribosomal subunit protein uS5 (223 aa).

Low complexity predominate over residues 1–15 (MTEAVAAEATETAPA). The segment at 1-51 (MTEAVAAEATETAPATDDRRGGRRGERGDRGQGRGDRGGRGGRDGGREAEK) is disordered. Over residues 16 to 51 (TDDRRGGRRGERGDRGQGRGDRGGRGGRDGGREAEK) the composition is skewed to basic and acidic residues. One can recognise an S5 DRBM domain in the interval 54–117 (FVERVVTINR…EEAKKSFFRV (64 aa)).

This sequence belongs to the universal ribosomal protein uS5 family. As to quaternary structure, part of the 30S ribosomal subunit. Contacts proteins S4 and S8.

Functionally, with S4 and S12 plays an important role in translational accuracy. In terms of biological role, located at the back of the 30S subunit body where it stabilizes the conformation of the head with respect to the body. The polypeptide is Small ribosomal subunit protein uS5 (Paenarthrobacter aurescens (strain TC1)).